Here is a 465-residue protein sequence, read N- to C-terminus: Asparagine--tRNA ligase (465 aa).

The protein belongs to the class-II aminoacyl-tRNA synthetase family. In terms of assembly, homodimer.

It is found in the cytoplasm. It catalyses the reaction tRNA(Asn) + L-asparagine + ATP = L-asparaginyl-tRNA(Asn) + AMP + diphosphate + H(+). This chain is Asparagine--tRNA ligase, found in Hahella chejuensis (strain KCTC 2396).